The chain runs to 183 residues: uncharacterized protein (183 aa).

The interval 54–89 (DAASQSDPLPGGDGLTGGDSKATRRTSPRYYPPSEA) is disordered.

This is an uncharacterized protein from Human cytomegalovirus (strain AD169) (HHV-5).